The primary structure comprises 252 residues: Type II secretion system protein N (252 aa).

The Cytoplasmic portion of the chain corresponds to 1–4 (MKQK). A helical transmembrane segment spans residues 5–25 (VLIAALFLVAYLGFLLVKLPA). Topologically, residues 26 to 252 (TLVVRHLPLP…RFPLRYQGRI (227 aa)) are periplasmic.

This sequence belongs to the GSP N family.

The protein localises to the cell inner membrane. Its function is as follows. Involved in a type II secretion system (T2SS, formerly general secretion pathway, GSP) for the export of proteins. The sequence is that of Type II secretion system protein N (exeN) from Aeromonas hydrophila.